Here is a 104-residue protein sequence, read N- to C-terminus: Thioredoxin (104 aa).

The Thioredoxin domain occupies 2 to 104 (AIVKVTDSDF…NLAEVLDKHL (103 aa)). Cys29 and Cys32 form a disulfide bridge.

It belongs to the thioredoxin family.

Component of the thioredoxin-thioredoxin reductase system. Participates in various redox reactions through the reversible oxidation of its active center dithiol to a disulfide and catalyzes dithiol-disulfide exchange reactions. This Staphylococcus epidermidis (strain ATCC 35984 / DSM 28319 / BCRC 17069 / CCUG 31568 / BM 3577 / RP62A) protein is Thioredoxin (trxA).